We begin with the raw amino-acid sequence, 533 residues long: Phospho-2-dehydro-3-deoxyheptonate aldolase 1, chloroplastic (533 aa).

The transit peptide at 1-57 directs the protein to the chloroplast; it reads MALSTNSTTSSLLPKTPLVQQPLLKNASLPTTTKAIRFIQPISAIHSSDSSKNTPIV. Residues 47–56 are compositionally biased toward polar residues; that stretch reads SSDSSKNTPI. The segment at 47–70 is disordered; sequence SSDSSKNTPIVSAKPSSPPAATST. Positions 57-70 are enriched in low complexity; the sequence is VSAKPSSPPAATST. Residue cysteine 145 coordinates Mn(2+). Residues arginine 184, 343–344, lysine 366, and arginine 397 each bind substrate; that span reads ER. Histidine 429, glutamate 471, and aspartate 501 together coordinate Mn(2+).

Belongs to the class-II DAHP synthase family. Homodimer. Mn(2+) serves as cofactor. As to expression, mostly expressed in flowers, especially in petal limbs and tubes, and, to a lower extent, in roots, stems, stigmas, anthers, leaves and sepals.

The protein localises to the plastid. It localises to the chloroplast. It carries out the reaction D-erythrose 4-phosphate + phosphoenolpyruvate + H2O = 7-phospho-2-dehydro-3-deoxy-D-arabino-heptonate + phosphate. It functions in the pathway metabolic intermediate biosynthesis; chorismate biosynthesis; chorismate from D-erythrose 4-phosphate and phosphoenolpyruvate: step 1/7. In terms of biological role, involved in the production of volatile organic compounds (VOCs), including floral volatile benzenoids and phenylpropanoids (FVBP), in flowers of fragrant cultivars (e.g. cv. Mitchell and cv. V26), scent attracting pollinators (e.g. the night-active hawkmoth pollinator Manduca sexta). Catalyzes an aldol-like condensation reaction between phosphoenolpyruvate (PEP) and D-erythrose 4-phosphate (E4P) to generate 3-deoxy-D-arabino-heptulosonate 7-phosphate (DAH7P) and inorganic phosphate. The protein is Phospho-2-dehydro-3-deoxyheptonate aldolase 1, chloroplastic of Petunia hybrida (Petunia).